The sequence spans 324 residues: Brorin (324 aa).

The N-terminal stretch at 1–27 is a signal peptide; that stretch reads MPSSSAMAVGALSSSLLVTCCLMVALC. Positions 37 to 126 are disordered; the sequence is AQAPEQPGQE…TPQGEPPAAA (90 aa). Basic and acidic residues-rich tracts occupy residues 44-56 and 64-78; these read GQEK…RDSP and RASR…DWKS. Low complexity predominate over residues 92–107; the sequence is KQKQAWAAQGGSAKAA. The Mediates cell adhesion motif lies at 114–116; that stretch reads RGD. 2 VWFC domains span residues 152 to 211 and 215 to 273; these read KGCV…PQCK and NYCE…PICK.

Peripherally associated with AMPAR complex. AMPAR complex consists of an inner core made of 4 pore-forming GluA/GRIA proteins (GRIA1, GRIA2, GRIA3 and GRIA4) and 4 major auxiliary subunits arranged in a twofold symmetry. One of the two pairs of distinct binding sites is occupied either by CNIH2, CNIH3 or CACNG2, CACNG3. The other harbors CACNG2, CACNG3, CACNG4, CACNG8 or GSG1L. This inner core of AMPAR complex is complemented by outer core constituents binding directly to the GluA/GRIA proteins at sites distinct from the interaction sites of the inner core constituents. Outer core constituents include at least PRRT1, PRRT2, CKAMP44/SHISA9, FRRS1L and NRN1. The proteins of the inner and outer core serve as a platform for other, more peripherally associated AMPAR constituents, including VWC2. Alone or in combination, these auxiliary subunits control the gating and pharmacology of the AMPAR complex and profoundly impact their biogenesis and protein processing. As to expression, predominantly expressed in the brain (at protein level). It is expressed in the neurons but not the glial cells.

The protein resides in the secreted. The protein localises to the extracellular space. It is found in the extracellular matrix. It localises to the basement membrane. Its subcellular location is the synapse. In terms of biological role, BMP antagonist which may play a role in neural development. Promotes cell adhesion. The protein is Brorin (Vwc2) of Mus musculus (Mouse).